We begin with the raw amino-acid sequence, 645 residues long: Aminopeptidase P1 (645 aa).

Residue S2 is modified to N-acetylserine. R69 and H420 together coordinate a peptide. The Mn(2+) site is built by D440, D451, and H514. A peptide is bound by residues H514, H523, and E549. The Mn(2+) site is built by E549 and E563.

The protein belongs to the peptidase M24B family. As to quaternary structure, homodimer. Interacts with N-1-naphthylphthalamic acid (NPA). Mn(2+) is required as a cofactor. Zn(2+) serves as cofactor. In terms of processing, glycosylated. Also present in a non-glycosylated form. As to expression, ubiquitous with preferential expression in 5 days-old seedlings, roots, flowers, inflorescences and rosette leaves (at protein levels).

It localises to the cytoplasm. It is found in the cell membrane. Its subcellular location is the microsome membrane. It carries out the reaction Release of any N-terminal amino acid, including proline, that is linked to proline, even from a dipeptide or tripeptide.. With respect to regulation, inhibited by EGTA and apstatin, and, to some extent, by the flavonoid kaempferol. Its function is as follows. Catalyzes the removal of a penultimate prolyl residue from the N-termini of peptides, such as Arg-Pro-Pro. Aminopeptidase that binds to the auxin transport inhibitor N-1-naphthylphthalamic acid (NPA). May play a negative role in the regulation of PIN auxin transport proteins. In Arabidopsis thaliana (Mouse-ear cress), this protein is Aminopeptidase P1.